The chain runs to 77 residues: U8-lycotoxin-Ls1w (77 aa).

A signal peptide spans 1–20 (MKLIIFTGLVLFAIVSLIEA). The propeptide occupies 21 to 26 (QAENEK).

Belongs to the neurotoxin 19 (CSTX) family. 08 (U8-Lctx) subfamily. Post-translationally, contains 4 disulfide bonds. Expressed by the venom gland.

Its subcellular location is the secreted. The chain is U8-lycotoxin-Ls1w from Lycosa singoriensis (Wolf spider).